A 435-amino-acid polypeptide reads, in one-letter code: 5'-deoxyadenosine deaminase (435 aa).

Positions 64 and 66 each coordinate Zn(2+). Residues glutamate 93 and histidine 185 each contribute to the substrate site. A Zn(2+)-binding site is contributed by histidine 212. Substrate is bound by residues glutamate 215 and aspartate 300. Residue aspartate 300 coordinates Zn(2+).

Belongs to the metallo-dependent hydrolases superfamily. MTA/SAH deaminase family. In terms of assembly, homotetramer. Zn(2+) is required as a cofactor.

It catalyses the reaction 5'-deoxyadenosine + H2O + H(+) = 5'-deoxyinosine + NH4(+). The catalysed reaction is S-adenosyl-L-homocysteine + H2O + H(+) = S-inosyl-L-homocysteine + NH4(+). The enzyme catalyses S-methyl-5'-thioadenosine + H2O + H(+) = S-methyl-5'-thioinosine + NH4(+). It carries out the reaction adenosine + H2O + H(+) = inosine + NH4(+). The protein operates within amino-acid biosynthesis; S-adenosyl-L-methionine biosynthesis. Functionally, catalyzes the deamination of three SAM-derived enzymatic products, namely 5'-deoxyadenosine, S-adenosyl-L-homocysteine, and 5'-methylthioadenosine, to produce the inosine analogs. Can also deaminate adenosine. The preferred substrate for this enzyme is 5'-deoxyadenosine, but all these substrates are efficiently deaminated. Likely functions in a S-adenosyl-L-methionine (SAM) recycling pathway from S-adenosyl-L-homocysteine (SAH) produced from SAM-dependent methylation reactions. May also be involved in the recycling of 5'-deoxyadenosine, whereupon the 5'-deoxyribose moiety of 5'-deoxyinosine is further metabolized to deoxyhexoses used for the biosynthesis of aromatic amino acids in methanogens. The chain is 5'-deoxyadenosine deaminase from Methanobrevibacter smithii (strain ATCC 35061 / DSM 861 / OCM 144 / PS).